Here is a 124-residue protein sequence, read N- to C-terminus: Small ribosomal subunit protein bS6 (124 aa).

A disordered region spans residues 97 to 124 (EQGPSAMMRRGDRDRSNRSDRRRDRDAA). Basic and acidic residues predominate over residues 105 to 124 (RRGDRDRSNRSDRRRDRDAA).

Belongs to the bacterial ribosomal protein bS6 family.

Its function is as follows. Binds together with bS18 to 16S ribosomal RNA. In Zymomonas mobilis subsp. mobilis (strain ATCC 31821 / ZM4 / CP4), this protein is Small ribosomal subunit protein bS6.